The following is a 90-amino-acid chain: Acylphosphatase (90 aa).

The region spanning 5–90 (SYLFNVKGKV…WQELTDFKMY (86 aa)) is the Acylphosphatase-like domain. Residues R20 and N38 contribute to the active site.

It belongs to the acylphosphatase family.

The enzyme catalyses an acyl phosphate + H2O = a carboxylate + phosphate + H(+). The protein is Acylphosphatase (acyP) of Aliivibrio fischeri (strain ATCC 700601 / ES114) (Vibrio fischeri).